Reading from the N-terminus, the 289-residue chain is ATP phosphoribosyltransferase (289 aa).

This sequence belongs to the ATP phosphoribosyltransferase family. Long subfamily. The cofactor is Mg(2+).

It is found in the cytoplasm. It carries out the reaction 1-(5-phospho-beta-D-ribosyl)-ATP + diphosphate = 5-phospho-alpha-D-ribose 1-diphosphate + ATP. Its pathway is amino-acid biosynthesis; L-histidine biosynthesis; L-histidine from 5-phospho-alpha-D-ribose 1-diphosphate: step 1/9. With respect to regulation, feedback inhibited by histidine. In terms of biological role, catalyzes the condensation of ATP and 5-phosphoribose 1-diphosphate to form N'-(5'-phosphoribosyl)-ATP (PR-ATP). Has a crucial role in the pathway because the rate of histidine biosynthesis seems to be controlled primarily by regulation of HisG enzymatic activity. This Methanosarcina acetivorans (strain ATCC 35395 / DSM 2834 / JCM 12185 / C2A) protein is ATP phosphoribosyltransferase.